Here is a 335-residue protein sequence, read N- to C-terminus: MSWIGIKKAINRAGTQVMLKTGHIEQTIDKEYEFQEKRYRTMEENSIKLQKNLRLYLDSLRLLTNSQINIAESLNSFYGTNNDKRSSNISRTGSVNTGDKIQTIHEEEGEEKEEEENDNTTTTTTTTTTTITTTNTTYNYNNLIQEYYATIKQLNDSCIANLENPYNQTVLNPIARFNSYYIEINEIIKKRHNKLLDYDAMKNKLRKLIENPTTNISPSMKTNIIELNHNQYEEKLKIYNQELTEVESKYVEINNQLLIELPKLINHRISYFDPSFESFVKIQLRFFNENYHVLNQLQLKLDAQTRQDYIEGKLEDRIDDVLRKMKKLDITSGLD.

A BAR domain is found at 17–310; that stretch reads VMLKTGHIEQ…LDAQTRQDYI (294 aa). Residues 30–56 adopt a coiled-coil conformation; sequence KEYEFQEKRYRTMEENSIKLQKNLRLY. The interval 105–127 is disordered; that stretch reads HEEEGEEKEEEENDNTTTTTTTT. Residues 107-118 are compositionally biased toward acidic residues; it reads EEGEEKEEEEND. Positions 222–259 form a coiled coil; that stretch reads TNIIELNHNQYEEKLKIYNQELTEVESKYVEINNQLLI.

It localises to the cytoplasm. Its subcellular location is the cytoskeleton. Its function is as follows. Component of a cytoskeletal structure that is required for membrane curvature. In Candida albicans (strain SC5314 / ATCC MYA-2876) (Yeast), this protein is RVS161-like protein RVS162.